The chain runs to 292 residues: GTP cyclohydrolase FolE2 (292 aa).

Belongs to the GTP cyclohydrolase IV family.

The catalysed reaction is GTP + H2O = 7,8-dihydroneopterin 3'-triphosphate + formate + H(+). It functions in the pathway cofactor biosynthesis; 7,8-dihydroneopterin triphosphate biosynthesis; 7,8-dihydroneopterin triphosphate from GTP: step 1/1. Functionally, converts GTP to 7,8-dihydroneopterin triphosphate. The sequence is that of GTP cyclohydrolase FolE2 from Staphylococcus aureus (strain Newman).